A 937-amino-acid chain; its full sequence is Chromatin assembly factor 1 subunit A (937 aa).

The interval 21 to 69 (RLPFKRLNPVPKEKHDAEAEGKKGKCSKSGLGQSKDSSTDTLHASTDNM) is disordered. The segment covering 31-43 (PKEKHDAEAEGKK) has biased composition (basic and acidic residues). Residues 59–69 (TDTLHASTDNM) show a composition bias toward polar residues. Residues 213-226 (FEGKMPVVLLEDIM) carry the PxVxL motif motif. Disordered regions lie at residues 250–386 (SHEG…EKRK), 574–614 (VDSD…IPHG), 753–778 (GDTS…VPSK), 831–851 (SGKE…TPVS), and 910–937 (TVTE…SNTV). The span at 255–269 (SVLTNSSLSSLSVSS) shows a compositional bias: low complexity. The span at 301–386 (SSAEKEKLRL…KLRVKEEKRK (86 aa)) shows a compositional bias: basic and acidic residues. 2 stretches are compositionally biased toward acidic residues: residues 574 to 586 (VDSD…EEPG) and 594 to 608 (GDDE…DDDG). The segment covering 756-766 (SPVSPNTSRPQ) has biased composition (polar residues).

It belongs to the CHAF1A family. As to quaternary structure, subunit of the CAF-1 complex that contains RBBP4, CHAF1B and CHAF1A. Interacts with CHAF1B, PCNA and RBBP4.

It localises to the nucleus. Acts as a component of the histone chaperone complex chromatin assembly factor 1 (CAF-1), which assembles histone octamers onto DNA during replication and repair. CAF-1 performs the first step of the nucleosome assembly process, bringing newly synthesized histones H3 and H4 to replicating DNA; histones H2A/H2B can bind to this chromatin precursor subsequent to DNA replication to complete the histone octamer. The polypeptide is Chromatin assembly factor 1 subunit A (CHAF1A) (Gallus gallus (Chicken)).